The primary structure comprises 97 residues: Co-chaperonin GroES (97 aa).

It belongs to the GroES chaperonin family. As to quaternary structure, heptamer of 7 subunits arranged in a ring. Interacts with the chaperonin GroEL.

Its subcellular location is the cytoplasm. Together with the chaperonin GroEL, plays an essential role in assisting protein folding. The GroEL-GroES system forms a nano-cage that allows encapsulation of the non-native substrate proteins and provides a physical environment optimized to promote and accelerate protein folding. GroES binds to the apical surface of the GroEL ring, thereby capping the opening of the GroEL channel. The chain is Co-chaperonin GroES from Symbiobacterium thermophilum (strain DSM 24528 / JCM 14929 / IAM 14863 / T).